A 41-amino-acid chain; its full sequence is U15-myrmicitoxin-Tb1b (41 aa).

The signal sequence occupies residues 1–25; the sequence is MKIVKLITIFAMIATLMVTVTNGEA. A Histidine amide modification is found at histidine 40.

In terms of tissue distribution, expressed by the venom gland.

It is found in the secreted. Its function is as follows. Venom protein with unknown function. Does not induce paralysis when a high dose is administered by intrathoracic injection into the blowfly Lucilia caesar. This is U15-myrmicitoxin-Tb1b from Tetramorium bicarinatum (Tramp ant).